The chain runs to 468 residues: Probable Xaa-Pro aminopeptidase PEPP (468 aa).

Mn(2+) contacts are provided by Asp264, Asp275, Glu398, and Glu438.

It belongs to the peptidase M24B family. Mn(2+) is required as a cofactor.

The enzyme catalyses Release of any N-terminal amino acid, including proline, that is linked to proline, even from a dipeptide or tripeptide.. In terms of biological role, catalyzes the removal of a penultimate prolyl residue from the N-termini of peptides. The chain is Probable Xaa-Pro aminopeptidase PEPP (PEPP) from Paracoccidioides lutzii (strain ATCC MYA-826 / Pb01) (Paracoccidioides brasiliensis).